The chain runs to 263 residues: Large ribosomal subunit protein uL29m (263 aa).

2 disordered regions span residues 51-92 (ARVT…EELP) and 208-263 (PEID…APRV). Basic and acidic residues predominate over residues 53–66 (VTRDNSKQRGESAL). Over residues 214–223 (NPENPYTPST) the composition is skewed to polar residues. The segment covering 233–245 (GAEASETQSTTTE) has biased composition (low complexity). Residues 246–257 (IDPTTIPSSKSQ) show a composition bias toward polar residues.

It belongs to the universal ribosomal protein uL29 family. In terms of assembly, component of the mitochondrial large ribosomal subunit (mt-LSU). Mature N.crassa 74S mitochondrial ribosomes consist of a small (37S) and a large (54S) subunit. The 37S small subunit contains a 16S ribosomal RNA (16S mt-rRNA) and 32 different proteins. The 54S large subunit contains a 23S rRNA (23S mt-rRNA) and 42 different proteins.

The protein resides in the mitochondrion. Its function is as follows. Component of the mitochondrial ribosome (mitoribosome), a dedicated translation machinery responsible for the synthesis of mitochondrial genome-encoded proteins, including at least some of the essential transmembrane subunits of the mitochondrial respiratory chain. The mitoribosomes are attached to the mitochondrial inner membrane and translation products are cotranslationally integrated into the membrane. The protein is Large ribosomal subunit protein uL29m (mrpl4) of Neurospora crassa (strain ATCC 24698 / 74-OR23-1A / CBS 708.71 / DSM 1257 / FGSC 987).